The primary structure comprises 238 residues: Probable transcriptional regulatory protein SZO_02930 (238 aa).

Belongs to the TACO1 family. YeeN subfamily.

It localises to the cytoplasm. This is Probable transcriptional regulatory protein SZO_02930 from Streptococcus equi subsp. zooepidemicus (strain H70).